We begin with the raw amino-acid sequence, 506 residues long: Maturase K (506 aa).

Belongs to the intron maturase 2 family. MatK subfamily.

The protein localises to the plastid. It is found in the chloroplast. Its function is as follows. Usually encoded in the trnK tRNA gene intron. Probably assists in splicing its own and other chloroplast group II introns. This is Maturase K from Melilotus albus (White sweet clover).